The following is a 109-amino-acid chain: Nascent polypeptide-associated complex protein (109 aa).

The region spanning 3 to 69 (PMNPKQLKKL…TEEERVVLKI (67 aa)) is the NAC-A/B domain.

The protein belongs to the NAC-alpha family. In terms of assembly, homodimer. Interacts with the ribosome. Binds ribosomal RNA.

Functionally, contacts the emerging nascent chain on the ribosome. This chain is Nascent polypeptide-associated complex protein, found in Pyrococcus abyssi (strain GE5 / Orsay).